The following is a 1105-amino-acid chain: Carbamoyl phosphate synthase large chain (1105 aa).

The interval 1–402 (MPKRDDIEKV…ALGKAVRSLE (402 aa)) is carboxyphosphate synthetic domain. ATP is bound by residues Arg-129, Arg-169, Gly-175, Gly-176, Lys-208, Val-210, Glu-215, Gly-241, Ile-242, His-243, Gln-285, and Glu-299. In terms of domain architecture, ATP-grasp 1 spans 133-328 (KTAMKNCGLE…IAKISALLAV (196 aa)). The Mg(2+) site is built by Gln-285, Glu-299, and Asn-301. Positions 285, 299, and 301 each coordinate Mn(2+). Residues 403 to 542 (LDIAPKLDLR…STYNGMENET (140 aa)) are oligomerization domain. The interval 543–945 (IPSKRRKIMV…AFAKAQLSAD (403 aa)) is carbamoyl phosphate synthetic domain. Positions 667–858 (AKFLKQSGLS…VAKIAAKTII (192 aa)) constitute an ATP-grasp 2 domain. ATP contacts are provided by Arg-703, Lys-742, Leu-744, Glu-749, Gly-774, Ile-775, His-776, Ser-777, Gln-817, and Glu-829. Residues Gln-817, Glu-829, and Asn-831 each contribute to the Mg(2+) site. Mn(2+) is bound by residues Gln-817, Glu-829, and Asn-831. Residues 940 to 1101 (AQLSADGIST…QDIFYAQQNT (162 aa)) enclose the MGS-like domain. Residues 946–1105 (GISTKSLLVT…YAQQNTLLKK (160 aa)) form an allosteric domain region.

Belongs to the CarB family. Composed of two chains; the small (or glutamine) chain promotes the hydrolysis of glutamine to ammonia, which is used by the large (or ammonia) chain to synthesize carbamoyl phosphate. Tetramer of heterodimers (alpha,beta)4. Requires Mg(2+) as cofactor. The cofactor is Mn(2+).

It carries out the reaction hydrogencarbonate + L-glutamine + 2 ATP + H2O = carbamoyl phosphate + L-glutamate + 2 ADP + phosphate + 2 H(+). The catalysed reaction is hydrogencarbonate + NH4(+) + 2 ATP = carbamoyl phosphate + 2 ADP + phosphate + 2 H(+). It participates in amino-acid biosynthesis; L-arginine biosynthesis; carbamoyl phosphate from bicarbonate: step 1/1. Its pathway is pyrimidine metabolism; UMP biosynthesis via de novo pathway; (S)-dihydroorotate from bicarbonate: step 1/3. In terms of biological role, large subunit of the glutamine-dependent carbamoyl phosphate synthetase (CPSase). CPSase catalyzes the formation of carbamoyl phosphate from the ammonia moiety of glutamine, carbonate, and phosphate donated by ATP, constituting the first step of 2 biosynthetic pathways, one leading to arginine and/or urea and the other to pyrimidine nucleotides. The large subunit (synthetase) binds the substrates ammonia (free or transferred from glutamine from the small subunit), hydrogencarbonate and ATP and carries out an ATP-coupled ligase reaction, activating hydrogencarbonate by forming carboxy phosphate which reacts with ammonia to form carbamoyl phosphate. In Pseudothermotoga lettingae (strain ATCC BAA-301 / DSM 14385 / NBRC 107922 / TMO) (Thermotoga lettingae), this protein is Carbamoyl phosphate synthase large chain.